Consider the following 122-residue polypeptide: Large ribosomal subunit protein bL12 (122 aa).

The protein belongs to the bacterial ribosomal protein bL12 family. Homodimer. Part of the ribosomal stalk of the 50S ribosomal subunit. Forms a multimeric L10(L12)X complex, where L10 forms an elongated spine to which 2 to 4 L12 dimers bind in a sequential fashion. Binds GTP-bound translation factors.

Its function is as follows. Forms part of the ribosomal stalk which helps the ribosome interact with GTP-bound translation factors. Is thus essential for accurate translation. The sequence is that of Large ribosomal subunit protein bL12 from Streptococcus pneumoniae serotype 19F (strain G54).